Here is a 496-residue protein sequence, read N- to C-terminus: Glutamate--tRNA ligase (496 aa).

Positions 11–21 (PSPTGLLHIGN) match the 'HIGH' region motif. The 'KMSKS' region motif lies at 255-259 (KLSKR). Lys-258 contributes to the ATP binding site.

Belongs to the class-I aminoacyl-tRNA synthetase family. Glutamate--tRNA ligase type 1 subfamily. As to quaternary structure, monomer.

It localises to the cytoplasm. The enzyme catalyses tRNA(Glu) + L-glutamate + ATP = L-glutamyl-tRNA(Glu) + AMP + diphosphate. In terms of biological role, catalyzes the attachment of glutamate to tRNA(Glu) in a two-step reaction: glutamate is first activated by ATP to form Glu-AMP and then transferred to the acceptor end of tRNA(Glu). This chain is Glutamate--tRNA ligase, found in Streptococcus pyogenes serotype M49 (strain NZ131).